The chain runs to 314 residues: Melanoma-associated antigen 3 (314 aa).

Over residues 1 to 20 (MPLEQRSQHCKPEEGLEARG) the composition is skewed to basic and acidic residues. The tract at residues 1–99 (MPLEQRSQHC…QEEEGPSTFP (99 aa)) is disordered. Residues 21–44 (EALGLVGAQAPATEEQEAASSSST) show a composition bias toward low complexity. The segment covering 65–87 (PQGASSLPTTMNYPLWSQSYEDS) has biased composition (polar residues). The MAGE domain occupies 109 to 308 (LSRKVAELVH…ISYPPLHEWV (200 aa)).

Interacts with TRIM28. Ubiquitinated by the DCX(DCAF12) complex specifically recognizes the diglutamate (Glu-Glu) at the C-terminus, leading to its degradation. As to expression, expressed in many tumors of several types, such as melanoma, head and neck squamous cell carcinoma, lung carcinoma and breast carcinoma, but not in normal tissues except for testes and placenta. Never expressed in kidney tumors, Leukemias and lymphomas.

In terms of biological role, activator of ubiquitin ligase activity of RING-type zinc finger-containing E3 ubiquitin-protein ligases that acts as a repressor of autophagy. May enhance ubiquitin ligase activity of TRIM28 and stimulate p53/TP53 ubiquitination by TRIM28. Proposed to act through recruitment and/or stabilization of the Ubl-conjugating enzyme (E2) at the E3:substrate complex. May play a role in embryonal development and tumor transformation or aspects of tumor progression. In vitro promotes cell viability in melanoma cell lines. Antigen recognized on a melanoma by autologous cytolytic T-lymphocytes. In Homo sapiens (Human), this protein is Melanoma-associated antigen 3.